We begin with the raw amino-acid sequence, 312 residues long: Small ribosomal subunit protein RACK1 (312 aa).

7 WD repeats span residues Gly-9–Lys-42, Gly-63–Asp-93, Lys-105–Asn-135, Gly-148–Asn-180, Gly-192–Asp-222, Asn-233–Asp-262, and Pro-279–Ser-307.

Belongs to the WD repeat G protein beta family. Ribosomal protein RACK1 subfamily.

This chain is Small ribosomal subunit protein RACK1, found in Leishmania chagasi.